A 474-amino-acid chain; its full sequence is GTPase Der (474 aa).

EngA-type G domains lie at 2-166 (LRIA…NVPE) and 212-385 (LKIA…TTVS). GTP is bound by residues 8-15 (GRPNVGKS), 55-59 (DTGGV), 118-121 (NKAD), 218-225 (GRPNVGKS), 265-269 (DTAGL), and 330-333 (NKWD). The KH-like domain maps to 386–470 (SKVPTPVVNK…PFDLEFKEKT (85 aa)).

Belongs to the TRAFAC class TrmE-Era-EngA-EngB-Septin-like GTPase superfamily. EngA (Der) GTPase family. In terms of assembly, associates with the 50S ribosomal subunit.

Functionally, GTPase that plays an essential role in the late steps of ribosome biogenesis. The protein is GTPase Der of Chlamydia abortus (strain DSM 27085 / S26/3) (Chlamydophila abortus).